Here is a 629-residue protein sequence, read N- to C-terminus: Phosphatidylinositol-3,5-bisphosphate 3-phosphatase MTMR8 (629 aa).

Residues 126–500 form the Myotubularin phosphatase domain; that stretch reads GWKLIDLKVD…FSFQFWCGMY (375 aa). The a 1,2-diacyl-sn-glycero-3-phospho-(1D-myo-inositol-3,5-bisphosphate) site is built by Asn250, Asn275, and Ile276. Asn250, Asn275, and Ile276 together coordinate a 1,2-diacyl-sn-glycero-3-phospho-(1D-myo-inositol-3-phosphate). The active-site Phosphocysteine intermediate is Cys338. Ser339, Asp340, Gly341, Trp342, Asp343, Arg344, Lys380, and Arg384 together coordinate a 1,2-diacyl-sn-glycero-3-phospho-(1D-myo-inositol-3,5-bisphosphate). Residues Ser339, Asp340, Gly341, Trp342, Asp343, and Arg344 each contribute to the a 1,2-diacyl-sn-glycero-3-phospho-(1D-myo-inositol-3-phosphate) site. Phosphate is bound by residues Ser339 and Asp340. Positions 342, 343, and 344 each coordinate phosphate. Arg384 contacts a 1,2-diacyl-sn-glycero-3-phospho-(1D-myo-inositol-3-phosphate). Residues 517-543 are a coiled coil; that stretch reads LLSCMNQKIKLEDNASELENKLPFLDG.

Belongs to the protein-tyrosine phosphatase family. Non-receptor class myotubularin subfamily. In terms of assembly, homodimer.

The protein resides in the nucleus envelope. The enzyme catalyses a 1,2-diacyl-sn-glycero-3-phospho-(1D-myo-inositol-3,5-bisphosphate) + H2O = a 1,2-diacyl-sn-glycero-3-phospho-(1D-myo-inositol-5-phosphate) + phosphate. It carries out the reaction a 1,2-diacyl-sn-glycero-3-phospho-(1D-myo-inositol-3-phosphate) + H2O = a 1,2-diacyl-sn-glycero-3-phospho-(1D-myo-inositol) + phosphate. The catalysed reaction is 1,2-dioctanoyl-sn-glycero-3-phospho-(1D-myo-inositol-3,5-bisphosphate) + H2O = 1,2-dioctanoyl-sn-glycero-3-phospho-(1D-myo-inositol-5-phosphate) + phosphate. In terms of biological role, lipid phosphatase that specifically dephosphorylates the D-3 position of phosphatidylinositol 3-phosphate and phosphatidylinositol 3,5-bisphosphate, generating phosphatidylinositol and phosphatidylinositol 5-phosphate. In Gallus gallus (Chicken), this protein is Phosphatidylinositol-3,5-bisphosphate 3-phosphatase MTMR8.